Reading from the N-terminus, the 569-residue chain is Rab GTPase-binding effector protein 2 (569 aa).

Disordered stretches follow at residues 1–41 (MAAA…GELS), 180–265 (IQRR…ETAS), and 388–411 (RAEQ…ESLP). N-acetylalanine is present on Ala2. A coiled-coil region spans residues 34–187 (EAESGELSRL…QEIQRRPRHA (154 aa)). Phosphoserine is present on residues Ser189 and Ser193. Ser200 carries the phosphoserine; by GSK3-alpha modification. Ser204 carries the phosphoserine modification. Composition is skewed to low complexity over residues 245–257 (SSSS…QGLS) and 393–403 (PSSAPQGSQQE). Positions 289–523 (DTQWEQLQTE…LQAELETSEQ (235 aa)) form a coiled coil.

This sequence belongs to the rabaptin family. In terms of assembly, heterodimer with RABGEF1. The dimer binds RAB5A that has been activated by GTP-binding. Interacts with SDCCAG8; this interaction is important for ciliogenesis regulation. Interacts with RAB4A; this interaction may mediate VEGFR2 cell surface expression.

The protein localises to the cytoplasm. It localises to the early endosome. The protein resides in the cytoskeleton. It is found in the microtubule organizing center. Its subcellular location is the centrosome. The protein localises to the cilium basal body. Plays a role in membrane trafficking and in homotypic early endosome fusion. Participates in arteriogenesis by regulating vascular endothelial growth factor receptor 2/VEGFR2 cell surface expression and endosomal trafficking. By interacting with SDCCAG8, localizes to centrosomes and plays a critical role in ciliogenesis. The sequence is that of Rab GTPase-binding effector protein 2 (RABEP2) from Homo sapiens (Human).